The following is a 167-amino-acid chain: UPF0336 protein MAP_4109 (167 aa).

The 104-residue stretch at 21–124 (GREQLRQFAL…RFGADIVVTK (104 aa)) folds into the MaoC-like domain.

Belongs to the UPF0336 family.

The sequence is that of UPF0336 protein MAP_4109 from Mycolicibacterium paratuberculosis (strain ATCC BAA-968 / K-10) (Mycobacterium paratuberculosis).